A 393-amino-acid polypeptide reads, in one-letter code: 1-deoxy-D-xylulose 5-phosphate reductoisomerase (393 aa).

Residues Thr-10, Gly-11, Ser-12, Ile-13, Gln-38, and Asn-124 each contribute to the NADPH site. Residue Lys-125 coordinates 1-deoxy-D-xylulose 5-phosphate. Residue Glu-126 participates in NADPH binding. Residue Asp-150 participates in Mn(2+) binding. 4 residues coordinate 1-deoxy-D-xylulose 5-phosphate: Ser-151, Glu-152, Ser-179, and His-202. Glu-152 is a Mn(2+) binding site. Gly-208 is a binding site for NADPH. 1-deoxy-D-xylulose 5-phosphate is bound by residues Ser-215, Asn-220, Lys-221, and Glu-224. Glu-224 contacts Mn(2+).

This sequence belongs to the DXR family. Mg(2+) serves as cofactor. Requires Mn(2+) as cofactor.

The enzyme catalyses 2-C-methyl-D-erythritol 4-phosphate + NADP(+) = 1-deoxy-D-xylulose 5-phosphate + NADPH + H(+). The protein operates within isoprenoid biosynthesis; isopentenyl diphosphate biosynthesis via DXP pathway; isopentenyl diphosphate from 1-deoxy-D-xylulose 5-phosphate: step 1/6. In terms of biological role, catalyzes the NADPH-dependent rearrangement and reduction of 1-deoxy-D-xylulose-5-phosphate (DXP) to 2-C-methyl-D-erythritol 4-phosphate (MEP). The polypeptide is 1-deoxy-D-xylulose 5-phosphate reductoisomerase (Ralstonia nicotianae (strain ATCC BAA-1114 / GMI1000) (Ralstonia solanacearum)).